The sequence spans 431 residues: tRNA(Ile)-lysidine synthase (431 aa).

25-30 is an ATP binding site; it reads SGGLDS.

The protein belongs to the tRNA(Ile)-lysidine synthase family.

It localises to the cytoplasm. It carries out the reaction cytidine(34) in tRNA(Ile2) + L-lysine + ATP = lysidine(34) in tRNA(Ile2) + AMP + diphosphate + H(+). Functionally, ligates lysine onto the cytidine present at position 34 of the AUA codon-specific tRNA(Ile) that contains the anticodon CAU, in an ATP-dependent manner. Cytidine is converted to lysidine, thus changing the amino acid specificity of the tRNA from methionine to isoleucine. The protein is tRNA(Ile)-lysidine synthase of Legionella pneumophila (strain Lens).